A 347-amino-acid polypeptide reads, in one-letter code: NADH-ubiquinone oxidoreductase chain 2 (347 aa).

Transmembrane regions (helical) follow at residues 3–23 (PPIF…VMTS), 25–45 (HWML…PILM), 59–79 (YFLT…INLL), 96–116 (ILMT…FWVP), 122–142 (ISLS…LSIL), 149–169 (INPH…GWGG), 178–198 (IMAY…LYNP), 201–221 (MFLN…LFML), 237–257 (APLI…LPPL), 274–294 (EMII…YFYM), and 323–343 (TIFL…TPMI).

This sequence belongs to the complex I subunit 2 family. Core subunit of respiratory chain NADH dehydrogenase (Complex I) which is composed of 45 different subunits. Interacts with TMEM242.

Its subcellular location is the mitochondrion inner membrane. It catalyses the reaction a ubiquinone + NADH + 5 H(+)(in) = a ubiquinol + NAD(+) + 4 H(+)(out). Its function is as follows. Core subunit of the mitochondrial membrane respiratory chain NADH dehydrogenase (Complex I) which catalyzes electron transfer from NADH through the respiratory chain, using ubiquinone as an electron acceptor. Essential for the catalytic activity and assembly of complex I. The chain is NADH-ubiquinone oxidoreductase chain 2 from Viverra tangalunga (Malayan civet).